The following is a 388-amino-acid chain: Putative 8-amino-7-oxononanoate synthase (388 aa).

Arginine 22 lines the substrate pocket. Residue 109–110 (GY) participates in pyridoxal 5'-phosphate binding. Histidine 134 contributes to the substrate binding site. Pyridoxal 5'-phosphate contacts are provided by residues serine 182, 207 to 210 (DEAH), and 237 to 240 (TLSK). At lysine 240 the chain carries N6-(pyridoxal phosphate)lysine. Threonine 354 is a substrate binding site.

It belongs to the class-II pyridoxal-phosphate-dependent aminotransferase family. BioF subfamily. In terms of assembly, homodimer. Requires pyridoxal 5'-phosphate as cofactor.

It catalyses the reaction 6-carboxyhexanoyl-[ACP] + L-alanine + H(+) = (8S)-8-amino-7-oxononanoate + holo-[ACP] + CO2. It functions in the pathway cofactor biosynthesis; biotin biosynthesis. Its function is as follows. Catalyzes the decarboxylative condensation of pimeloyl-[acyl-carrier protein] and L-alanine to produce 8-amino-7-oxononanoate (AON), [acyl-carrier protein], and carbon dioxide. In Gloeobacter violaceus (strain ATCC 29082 / PCC 7421), this protein is Putative 8-amino-7-oxononanoate synthase (bioF).